The following is a 584-amino-acid chain: A-type ATP synthase subunit A (584 aa).

233-240 contributes to the ATP binding site; the sequence is GPFGSGKT.

Belongs to the ATPase alpha/beta chains family. As to quaternary structure, has multiple subunits with at least A(3), B(3), C, D, E, F, H, I and proteolipid K(x).

It is found in the cell membrane. The catalysed reaction is ATP + H2O + 4 H(+)(in) = ADP + phosphate + 5 H(+)(out). Its function is as follows. Component of the A-type ATP synthase that produces ATP from ADP in the presence of a proton gradient across the membrane. The A chain is the catalytic subunit. This is A-type ATP synthase subunit A from Methanobrevibacter smithii (strain ATCC 35061 / DSM 861 / OCM 144 / PS).